Here is a 263-residue protein sequence, read N- to C-terminus: Endonuclease 8 (263 aa).

Pro-2 acts as the Schiff-base intermediate with DNA in catalysis. Residue Glu-3 is the Proton donor of the active site. The Proton donor; for beta-elimination activity role is filled by Lys-53. Gln-70, Arg-125, and Asn-169 together coordinate DNA. An FPG-type zinc finger spans residues 229–263 (KVFHRDGELCERCGGIIEKTTLSSRPFYWCPGCQH). Arg-253 (proton donor; for delta-elimination activity) is an active-site residue.

The protein belongs to the FPG family. It depends on Zn(2+) as a cofactor.

The catalysed reaction is 2'-deoxyribonucleotide-(2'-deoxyribose 5'-phosphate)-2'-deoxyribonucleotide-DNA = a 3'-end 2'-deoxyribonucleotide-(2,3-dehydro-2,3-deoxyribose 5'-phosphate)-DNA + a 5'-end 5'-phospho-2'-deoxyribonucleoside-DNA + H(+). Involved in base excision repair of DNA damaged by oxidation or by mutagenic agents. Acts as a DNA glycosylase that recognizes and removes damaged bases. Has a preference for oxidized pyrimidines, such as thymine glycol, 5,6-dihydrouracil and 5,6-dihydrothymine. Has AP (apurinic/apyrimidinic) lyase activity and introduces nicks in the DNA strand. Cleaves the DNA backbone by beta-delta elimination to generate a single-strand break at the site of the removed base with both 3'- and 5'-phosphates. This is Endonuclease 8 from Shigella flexneri serotype 5b (strain 8401).